The sequence spans 317 residues: Probable RuBisCO transcriptional regulator (317 aa).

In terms of domain architecture, HTH lysR-type spans 6 to 63 (FTLDQLRILKAIAKEGSFKKAANSLYVSQPAISLQIQNLERQLNVALFERGNKKATLT). The H-T-H motif DNA-binding region spans 23–42 (FKKAANSLYVSQPAISLQIQ).

Belongs to the LysR transcriptional regulatory family.

It localises to the plastid. Its subcellular location is the chloroplast. In terms of biological role, trans-acting transcriptional regulator of RuBisCO genes (rbcL and rbcS) expression. In Porphyra purpurea (Red seaweed), this protein is Probable RuBisCO transcriptional regulator (rbcR).